The following is a 260-amino-acid chain: Triosephosphate isomerase (260 aa).

11-13 (NWK) provides a ligand contact to substrate. Histidine 103 serves as the catalytic Electrophile. Residue glutamate 175 is the Proton acceptor of the active site. Substrate-binding positions include glycine 181, serine 220, and 241-242 (GG).

Belongs to the triosephosphate isomerase family. In terms of assembly, homodimer.

It is found in the cytoplasm. The enzyme catalyses D-glyceraldehyde 3-phosphate = dihydroxyacetone phosphate. The protein operates within carbohydrate biosynthesis; gluconeogenesis. It participates in carbohydrate degradation; glycolysis; D-glyceraldehyde 3-phosphate from glycerone phosphate: step 1/1. In terms of biological role, involved in the gluconeogenesis. Catalyzes stereospecifically the conversion of dihydroxyacetone phosphate (DHAP) to D-glyceraldehyde-3-phosphate (G3P). This chain is Triosephosphate isomerase, found in Shewanella pealeana (strain ATCC 700345 / ANG-SQ1).